The sequence spans 459 residues: Interleukin-7 receptor subunit alpha (459 aa).

A signal peptide spans 1-20; sequence MTILGTTFGMVFSLLQVVSG. At 21 to 239 the chain is on the extracellular side; sequence ESGYAQNGDL…EINNSSGEMD (219 aa). A disulfide bond links Cys42 and Cys57. Residues Asn49 and Asn65 are each glycosylated (N-linked (GlcNAc...) asparagine). 2 disulfides stabilise this stretch: Cys74-Cys82 and Cys108-Cys118. In terms of domain architecture, Fibronectin type-III spans 131–231; it reads APFDLSVVYR…PSYYFRTPEI (101 aa). 2 N-linked (GlcNAc...) asparagine glycosylation sites follow: Asn151 and Asn182. A WSXWS motif motif is present at residues 217-221; sequence WSEWS. Asn232 and Asn233 each carry an N-linked (GlcNAc...) asparagine glycan. The helical transmembrane segment at 240 to 264 threads the bilayer; sequence PILLTISILSFFSVALLVILACVLW. At 265 to 459 the chain is on the cytoplasmic side; it reads KKRIKPIVWP…VTMSSFYQNQ (195 aa). The Box 1 motif signature appears at 272–280; it reads VWPSLPDHK. Position 282 is a phosphothreonine; by PKC (Thr282).

Belongs to the type I cytokine receptor family. Type 4 subfamily. In terms of assembly, the IL7 receptor is a heterodimer of IL7R and IL2RG. The TSLP receptor is a heterodimer of CRLF2 and IL7R. Interacts with CD53. In terms of processing, N-glycosylated IL-7Ralpha binds IL7 300-fold more tightly than the unglycosylated form. Ubiquitinated by MARCHF8; leading to lysosomal degradation.

It is found in the cell membrane. The protein resides in the secreted. Its function is as follows. Receptor for interleukin-7. Also acts as a receptor for thymic stromal lymphopoietin (TSLP). The polypeptide is Interleukin-7 receptor subunit alpha (IL7R) (Homo sapiens (Human)).